We begin with the raw amino-acid sequence, 603 residues long: Growth-regulating factor 6 (603 aa).

The disordered stretch occupies residues 34–58 (KHGRGNAGDQEHEWRPPAKQARGGD). In terms of domain architecture, QLQ spans 158–193 (PFTPSQWIELEHQALIYKYLAANSPVPHSLLIPIRR). The WRC domain occupies 223-267 (DPEPGRCRRTDGKKWRCSRDAVADQKYCERHMNRGRHRSRKHVEG). 2 consecutive short sequence motifs (bipartite nuclear localization signal) follow at residues 228–238 (RCRRTDGKKWR) and 256–263 (RGRHRSRK). Low complexity predominate over residues 561 to 571 (FGSVSSSTGSS). Residues 561 to 582 (FGSVSSSTGSSPRLENHSVYDG) form a disordered region.

This sequence belongs to the GRF family.

The protein localises to the nucleus. Transcription activator that plays a regulatory role in gibberellin-induced stem elongation. The sequence is that of Growth-regulating factor 6 (GRF6) from Oryza sativa subsp. japonica (Rice).